We begin with the raw amino-acid sequence, 324 residues long: Malate dehydrogenase (324 aa).

Residues 7 to 13 (GAAGGIG) and D34 contribute to the NAD(+) site. Substrate contacts are provided by R88 and R94. Residues N101 and 124–126 (VTN) contribute to the NAD(+) site. Substrate contacts are provided by N126 and R160. H184 functions as the Proton acceptor in the catalytic mechanism. M238 contacts NAD(+).

It belongs to the LDH/MDH superfamily. MDH type 1 family. Homodimer.

It carries out the reaction (S)-malate + NAD(+) = oxaloacetate + NADH + H(+). Functionally, catalyzes the reversible oxidation of malate to oxaloacetate. This Haemophilus ducreyi (strain 35000HP / ATCC 700724) protein is Malate dehydrogenase.